We begin with the raw amino-acid sequence, 93 residues long: DNA-binding protein Fis (93 aa).

A DNA-binding region (H-T-H motif) is located at residues 74-93; sequence QTRAALMMGINRGTLRKKLK.

Belongs to the transcriptional regulatory Fis family. As to quaternary structure, homodimer.

Activates ribosomal RNA transcription. Plays a direct role in upstream activation of rRNA promoters. The protein is DNA-binding protein Fis of Klebsiella pneumoniae.